The chain runs to 485 residues: Probable WRKY transcription factor 10 (485 aa).

Disordered regions lie at residues 43 to 62 (IFPQ…QRSG) and 215 to 293 (ISIE…SKTQ). Residues 216-264 (SIEDSESEDGNKDDDDEDFQYEDEDEDQYDQDQDVDEDEEEEKDEDNVA) are compositionally biased toward acidic residues. Positions 301-366 (SDEDNPNDGY…YDGIHNHPSP (66 aa)) form a DNA-binding region, WRKY. The Zn(2+) site is built by Cys-332, Cys-337, His-361, and His-363. The disordered stretch occupies residues 358–417 (DGIHNHPSPPARRSNSSSRNRSAGATIPQNQNDRTSRLGRAPPTPTPPTPPPSSYTPEEM). Residues 368 to 380 (ARRSNSSSRNRSA) show a composition bias toward low complexity. Pro residues predominate over residues 399–411 (PPTPTPPTPPPSS).

It belongs to the WRKY group I family. Interacts with IKU1. Expressed in male gametophytes (pollen) and in the endosperm of fertilized ovules.

The protein resides in the nucleus. In terms of biological role, transcription factor. Interacts specifically with the W box (5'-(T)TGAC[CT]-3'), a frequently occurring elicitor-responsive cis-acting element. Modulates seed size by negatively regulating the cellularization of syncytial endosperm. This chain is Probable WRKY transcription factor 10 (WRKY10), found in Arabidopsis thaliana (Mouse-ear cress).